Here is a 777-residue protein sequence, read N- to C-terminus: Shutoff protein (777 aa).

2 disordered regions span residues 1-55 and 261-283; these read MEED…SVPV and PLDS…DDDL. Polar residues predominate over residues 9–20; that stretch reads QPDSETLTSPTS. Residues 250 to 314 form a binding to host EIF4G region; the sequence is VMDHLLIKRV…VILVTVELEC (65 aa). The 119-residue stretch at 317 to 435 folds into the RRM domain; that stretch reads RFFANPQTLR…ELWTAFSERT (119 aa). Tyr334 and Tyr649 each carry phosphotyrosine; by host. The disordered stretch occupies residues 652 to 777; that stretch reads PQTGEELNTP…AAARLVESQP (126 aa). Positions 656–665 are enriched in polar residues; the sequence is EELNTPSPSA. The span at 728–738 shows a compositional bias: gly residues; it reads GAGGQTPQGRG. Positions 753–763 are enriched in basic and acidic residues; the sequence is TRSEPASDGES.

It belongs to the adenoviridae shutoff protein family. In terms of assembly, monomer. Interacts with hexon protein; this interaction allows chaperoning and trimerization of hexon proteins. Interacts (via N-terminus) with host initiation factor EIF4G (via C-terminus). Interacts (via RRM domain) with viral mRNAs that contain the tripartite leader; this interaction allows ribosome shunting and expression of viral late mRNAs. In terms of processing, might be cleaved by the viral protease. Post-translationally, phosphorylated. Tyrosine phosphorylation enhances preferential binding to tripartite leader mRNAs and allows ribosome shunting. Methylated. Asymmetric dimethylation by host PRMT1 of the Arg/Gly-rich region may regulate shutoff protein binding to hexon and promote the capsid assembly in the nucleus.

It localises to the host cytoplasm. Protein that inhibits host translation while promoting late viral translation by ribosome shunting. Blocks host cap-dependent translation by binding to eIF4G, displacing MKNK1 from cap initiation complexes and preventing EIF4E phosphorylation. Binds to the tripartite leader sequence of viral late mRNAs and recruits host eIF4G, PABPC1/poly-A binding protein and 40S ribosomes subunits on viral mRNAs, allowing ribosome shunting and efficient translation of late viral mRNAs even though conventional translation via ribosome scanning from the cap has been shut off in the host cell. During assembly, acts as a chaperone protein that helps hexon proteins assembly into trimers. This Homo sapiens (Human) protein is Shutoff protein.